The following is a 429-amino-acid chain: Ribosomal RNA small subunit methyltransferase B (429 aa).

Residues 254–260, Asp-277, Asp-303, and Asp-322 contribute to the S-adenosyl-L-methionine site; that span reads CAAPGGK. Residue Cys-375 is the Nucleophile of the active site. Residues 397 to 419 are disordered; the sequence is ALSETGTPDQPGQQNLPGGEEGD. A compositionally biased stretch (polar residues) spans 400–412; the sequence is ETGTPDQPGQQNL.

This sequence belongs to the class I-like SAM-binding methyltransferase superfamily. RsmB/NOP family.

It localises to the cytoplasm. It catalyses the reaction cytidine(967) in 16S rRNA + S-adenosyl-L-methionine = 5-methylcytidine(967) in 16S rRNA + S-adenosyl-L-homocysteine + H(+). In terms of biological role, specifically methylates the cytosine at position 967 (m5C967) of 16S rRNA. The sequence is that of Ribosomal RNA small subunit methyltransferase B from Salmonella typhi.